The chain runs to 263 residues: tRNA pseudouridine synthase A (263 aa).

D73 acts as the Nucleophile in catalysis. Y131 provides a ligand contact to substrate.

Belongs to the tRNA pseudouridine synthase TruA family. In terms of assembly, homodimer.

It catalyses the reaction uridine(38/39/40) in tRNA = pseudouridine(38/39/40) in tRNA. In terms of biological role, formation of pseudouridine at positions 38, 39 and 40 in the anticodon stem and loop of transfer RNAs. This chain is tRNA pseudouridine synthase A, found in Mycoplasmoides gallisepticum (strain R(low / passage 15 / clone 2)) (Mycoplasma gallisepticum).